The chain runs to 605 residues: Xylan O-acetyltransferase 7 (605 aa).

Over 1 to 124 (MKKKKNGMGA…AKQPSPRRTP (124 aa)) the chain is Cytoplasmic. Positions 86 to 126 (PCHLLPIQGQGQMQMQQRRKPPPAAAPVAAKQPSPRRTPGP) are disordered. The chain crosses the membrane as a helical; Signal-anchor for type II membrane protein span at residues 125–145 (GPLSFAGALLSLLVVATFLYI). The Lumenal segment spans residues 146-605 (NDHGNMMPPH…LYAHIVAHAA (460 aa)). Asparagine 192 and asparagine 218 each carry an N-linked (GlcNAc...) asparagine glycan. Cystine bridges form between cysteine 243/cysteine 296, cysteine 267/cysteine 332, cysteine 276/cysteine 584, and cysteine 499/cysteine 580. The GDS motif motif lies at 319–321 (GDS). Catalysis depends on serine 321, which acts as the Nucleophile. N-linked (GlcNAc...) asparagine glycosylation is found at asparagine 351, asparagine 363, asparagine 471, and asparagine 508. Residue aspartate 579 is the Proton donor of the active site. A DXXH motif motif is present at residues 579–582 (DCIH). The active-site Proton acceptor is the histidine 582.

Belongs to the PC-esterase family. TBL subfamily. In terms of tissue distribution, expressed in roots, leaves and stems.

It localises to the golgi apparatus membrane. Its function is as follows. Xylan acetyltransferase required for 2-O- and 3-O-monoacetylation of xylosyl residues in xylan. Catalyzes the 2-O-acetylation of xylan, followed by nonenzymatic acetyl migration to the O-3 position, resulting in products that are monoacetylated at both O-2 and O-3 positions. The sequence is that of Xylan O-acetyltransferase 7 from Oryza sativa subsp. japonica (Rice).